We begin with the raw amino-acid sequence, 215 residues long: MGQKVNPILFRLPVNRQWRSIWYADKKTFPRFIWEDYQIRKFIKKRLESAAVAKIVIERAGNRVRINIHTARPGLVIGRRAAELDKIKEEIMEIVEKGREVLVDVKEVKHPELEAQLVAENIALQIERRVAYRRAIKRAMQLTMDAGAVGIKVRCAGRLGGAEIARAERYHEGKVPLHSLRADVDYGFAEAKTVAGKIGVKVWICRKEDIATVVG.

The KH type-2 domain occupies 39 to 109 (IRKFIKKRLE…EVLVDVKEVK (71 aa)).

Belongs to the universal ribosomal protein uS3 family. In terms of assembly, part of the 30S ribosomal subunit. Forms a tight complex with proteins S10 and S14.

Its function is as follows. Binds the lower part of the 30S subunit head. Binds mRNA in the 70S ribosome, positioning it for translation. The polypeptide is Small ribosomal subunit protein uS3 (Methylacidiphilum infernorum (isolate V4) (Methylokorus infernorum (strain V4))).